The primary structure comprises 262 residues: Indole-3-glycerol phosphate synthase (262 aa).

It belongs to the TrpC family.

It carries out the reaction 1-(2-carboxyphenylamino)-1-deoxy-D-ribulose 5-phosphate + H(+) = (1S,2R)-1-C-(indol-3-yl)glycerol 3-phosphate + CO2 + H2O. It functions in the pathway amino-acid biosynthesis; L-tryptophan biosynthesis; L-tryptophan from chorismate: step 4/5. The chain is Indole-3-glycerol phosphate synthase from Dechloromonas aromatica (strain RCB).